The primary structure comprises 81 residues: Probable antitoxin MazE2 (81 aa).

Forms a complex with cognate toxin MazF2.

Antitoxin component of a type II toxin-antitoxin (TA) system. This chain is Probable antitoxin MazE2 (mazE2), found in Mycobacterium tuberculosis (strain ATCC 25618 / H37Rv).